Here is an 83-residue protein sequence, read N- to C-terminus: MANHKSALKRIRSNEKKRVLNRYQHKTTRNAIKALRIATDKTEATAKLSNVISMIDKLAKKNIIHDNKASNLKSKLTRFVSSL.

The protein belongs to the bacterial ribosomal protein bS20 family.

In terms of biological role, binds directly to 16S ribosomal RNA. The chain is Small ribosomal subunit protein bS20 from Flavobacterium psychrophilum (strain ATCC 49511 / DSM 21280 / CIP 103535 / JIP02/86).